Here is a 307-residue protein sequence, read N- to C-terminus: Ribosomal RNA small subunit methyltransferase H (307 aa).

S-adenosyl-L-methionine is bound by residues 32–34, D52, F78, D99, and Q106; that span reads GGH.

Belongs to the methyltransferase superfamily. RsmH family.

The protein resides in the cytoplasm. It carries out the reaction cytidine(1402) in 16S rRNA + S-adenosyl-L-methionine = N(4)-methylcytidine(1402) in 16S rRNA + S-adenosyl-L-homocysteine + H(+). Functionally, specifically methylates the N4 position of cytidine in position 1402 (C1402) of 16S rRNA. The sequence is that of Ribosomal RNA small subunit methyltransferase H from Caldicellulosiruptor saccharolyticus (strain ATCC 43494 / DSM 8903 / Tp8T 6331).